Reading from the N-terminus, the 240-residue chain is Ribosomal RNA large subunit methyltransferase E (240 aa).

Over residues 1-20 the composition is skewed to gly residues; that stretch reads MSKAGGNKGGSRTGGRGGAG. A disordered region spans residues 1 to 40; the sequence is MSKAGGNKGGSRTGGRGGAGSSNLHVRVKKKAGTTKESSR. The S-adenosyl-L-methionine site is built by Gly92, Trp94, Asp115, Asp131, and Asp155. Lys195 functions as the Proton acceptor in the catalytic mechanism.

Belongs to the class I-like SAM-binding methyltransferase superfamily. RNA methyltransferase RlmE family.

It is found in the cytoplasm. The enzyme catalyses uridine(2552) in 23S rRNA + S-adenosyl-L-methionine = 2'-O-methyluridine(2552) in 23S rRNA + S-adenosyl-L-homocysteine + H(+). In terms of biological role, specifically methylates the uridine in position 2552 of 23S rRNA at the 2'-O position of the ribose in the fully assembled 50S ribosomal subunit. The polypeptide is Ribosomal RNA large subunit methyltransferase E (Brucella ovis (strain ATCC 25840 / 63/290 / NCTC 10512)).